A 412-amino-acid polypeptide reads, in one-letter code: DNA utilization protein HofQ (412 aa).

Positions 1 to 18 (MKQWIAALLLMLIPGVQA) are cleaved as a signal peptide.

It belongs to the bacterial secretin family. PilQ subfamily.

It is found in the cell outer membrane. Functionally, required for the use of extracellular DNA as a nutrient. Could be the porin responsible for transport of DNA across the outer membrane. The chain is DNA utilization protein HofQ (hofQ) from Escherichia coli (strain K12).